Reading from the N-terminus, the 382-residue chain is Elloramycin glycosyltransferase ElmGT (382 aa).

It belongs to the glycosyltransferase 28 family.

It carries out the reaction 8-demethyltetracenomycin C + dTDP-beta-L-rhamnose = 8-demethyl-8-alpha-L-rhamnosyl-tetracenomycin C + dTDP + H(+). Its pathway is antibiotic biosynthesis. In terms of biological role, glycosyltransferase that transfers an L-rhamnose moiety from dTDP-L-rhamnose to the elloramycin aglycone 8-demethyl-tetracenomycin C (8DMTC) in elloramycin biosynthesis, an antitumor polyketide. Possesses donor substrate flexibility: able to transfer at least 11 different sugars to 8DMTC, such as NDP-D-glucose, as well as NDP-L-digitoxose, including both L- and D-isomeric forms of some sugars. This is Elloramycin glycosyltransferase ElmGT from Streptomyces olivaceus.